Reading from the N-terminus, the 635-residue chain is CCR4-NOT transcription complex subunit 10 (635 aa).

A Phosphothreonine modification is found at Thr-45. The stretch at 131–165 (LVARLEALEKAMAALVATLQLQLLLATNQLNRAEA) forms a coiled coil. Disordered regions lie at residues 396 to 416 (EERQSQSETPSTKPYAPQSAG) and 450 to 474 (SEDVEAPEPKDPTQESWRHPQDNNF). The segment covering 456–470 (PEPKDPTQESWRHPQ) has biased composition (basic and acidic residues).

Belongs to the CNOT10 family. In terms of assembly, component of the CCR4-NOT complex. CNOT10 and CNOT11 form a subcomplex docked to the CNOT1 scaffold.

It localises to the cytoplasm. It is found in the nucleus. Component of the CCR4-NOT complex which is one of the major cellular mRNA deadenylases and is linked to various cellular processes including bulk mRNA degradation, miRNA-mediated repression, translational repression during translational initiation and general transcription regulation. Additional complex functions may be a consequence of its influence on mRNA expression. Is not required for association of CNOT7 to the CCR4-NOT complex. The protein is CCR4-NOT transcription complex subunit 10 (Not10) of Drosophila melanogaster (Fruit fly).